The sequence spans 684 residues: MSDKNKLLLLFDRPLETVIVPRGPDQEAFDVPVDLLSDRYKAIGVQVSNRFGEETKSKIPVKKISPPPLGEILDLPRQANFSLFIPKHRKIAGRLINIFLGMKDTDDLQSMAIFARERVNPYLFNYCFSVAILHRPDTQDLDIPSFIQTFPDKYLDSQVFSRAREEATLVPEGQRVPIEIPRDYTASDLEVEHRVAYFREDLGINLHHWHWHLVYPFEGAEQVVRKDRRGELFYYMHQQVIARYNLERFCNALKRVTRFTEWKDPIPEAYFPKLDSLVASRAWPARVTDQKLSNLRRDQDQITQDVDDLYRWRDRIYEAIHSGFVQTDGGGRQELTEFGGIDILGNIVESSNLSVNRTLYGDLHNMGHVFISYIHDPDHRHLETFGVMGDSATAMRDPVFYRWHAYIDDLFQQFKGSLPRYTEEQLNYPGITVTGVSVQSQGGAANTLNTFWQQSDVDMSRGMDFQPRGSVFARFTHLNHQPFAYNITVNNASGGNKRGTCRIFLGPKTDERRTAWLFKDQRLLFIELDRFVVNLRQGENTITRNSTESSVTIPFERTFRNLDLSRPVGGEALAQFNFCGCGWPQHMLIPKGTPEGYDCQLFVMISNFDDDQVVQSTEGICNDAMSYCGIKDRLYPDKRSMGYPFDRLPRNNVNTLQEFLTPNMRVQDCVIKFTDRVVVPRPRN.

The propeptide at 1–50 is removed by PPAF1; it reads MSDKNKLLLLFDRPLETVIVPRGPDQEAFDVPVDLLSDRYKAIGVQVSNR. A glycan (N-linked (GlcNAc...) asparagine) is linked at asparagine 80. Cu cation-binding residues include histidine 208, histidine 212, and histidine 237. The active-site Proton acceptor is the glutamate 349. Asparagine 352 and asparagine 356 each carry an N-linked (GlcNAc...) asparagine glycan. Positions 364, 368, and 404 each coordinate Cu cation. N-linked (GlcNAc...) asparagine glycans are attached at residues asparagine 486, asparagine 491, and asparagine 545. Intrachain disulfides connect cysteine 579–cysteine 621 and cysteine 581–cysteine 628.

Belongs to the tyrosinase family. Dimer. Might form a homodimer or a heterodimer with PPO1. Might interact with PPAF2 (via CLIP domain); the interaction might be required for PPO1 activity. Cu(2+) is required as a cofactor. Post-translationally, propeptide cleaved by PPAF1. As to expression, hemocytes.

Its subcellular location is the secreted. Functionally, this is a copper-containing oxidase that functions in the formation of pigments such as melanins and other polyphenolic compounds. Catalyzes the oxidation of o-diphenols (N-acetyldopamine, 4-methylcatechol and dopamine). Cannot oxidize monophenols and p-phenols (L-tyrosine, tyramine, gentisic acid and hydroquinone). Binds to the surface of hemocytes and is involved in hemocyte melanization. Activation of the enzyme in response to bacterial lipopolysaccharides (LPS) suggests it may play a role in innate immunity. This chain is Phenoloxidase 1, found in Holotrichia diomphalia (Korean black chafer).